A 402-amino-acid chain; its full sequence is Fugralins biosynthesis cluster protein 2 (402 aa).

A run of 5 helical transmembrane segments spans residues 28-48 (NCLA…CFLL), 109-129 (ILIF…AILV), 145-165 (IFWW…TAIV), 232-252 (VIFG…AVTV), and 264-284 (LAPL…IVCV). 2 disordered regions span residues 312 to 335 (NPNT…TGPK) and 378 to 402 (TQDN…PWGV). Over residues 324–334 (TKGSQLSSTGP) the composition is skewed to polar residues. The N-linked (GlcNAc...) asparagine glycan is linked to asparagine 381.

Belongs to the SAT4 family.

The protein resides in the membrane. Its pathway is secondary metabolite biosynthesis. Part of the gene cluster that mediates the biosynthesis of the tetraketides fugralins such as linear fugralin A and cyclic fugralin B, volatile compounds that play a role in the asexual reproductive cycle but are not involved in pathogenicity. One of the key features of fugralins is the presence of a double methyl group, which is only rarely encountered in fungal secondary metabolites. As the fugralins cluster does not contain an independent methyltransferase, the PKS FGR1 is probably responsible for adding two methyl groups to the same carbon atom. Fugralin B is similar to fugralin A except for a cyclization between the carboxylic acid C-8 and the alcohol on C-4 resulting in a six membered lactone ring, probably catalyzed by the cyclase FGR4. The exact role of the individual cluster genes remains unknown and further work is needed to unravel the biosynthetic pathway. This chain is Fugralins biosynthesis cluster protein 2, found in Gibberella zeae (strain ATCC MYA-4620 / CBS 123657 / FGSC 9075 / NRRL 31084 / PH-1) (Wheat head blight fungus).